The sequence spans 795 residues: MIAFNSLFSLDKKRLKKLQRTLNTINSLKGQMATLSNEELQAKTTEFRKRLVNGETLDDICAEAFAVVREADERVLGLFPYDVQVIGGLVLHQGNTAEMKTGEGKTLTATMPLYLNALEGKGAMLLTNNSYLAIRDAEEMGKVYRFLGLSVGVGVSDNEEEDRDAATKRAVYSSDIVYSTSSALGFDYLIDNLASSKSQKYMPKLHYAIVDEADAVLLDMAQTPLVISGSPRVQSNLYKIADELILSFEEQVDYYFDKERQEVWIKNQGVREAERYFRIPHFYKQSNRELVRHLNLSLKAHKLFERGKDYVVDDGEIKLLDATNGRVLEGTKLQGGVHQAIEQKEHLNVTPESRAMASITYQNLFRMFTKLAGMTGTGKTAEKEFIEVYDMEVVRIPTNSPVRRIDYPDKIYTTLPEKIHATIEFVKQVHDTGQPILLVAGSVRMSELFSELLLLSGIPHSLLNAQSAVKEAQMIAEAGQKGAVTVATNMAGRGTDIKLGKGVSELGGLAVIGTERMKSQRMDLQLRGRSGRQGDIGFSQFFVSFEDDLMIESGPKWAQDYFRKNRDKVNPEKPKALGQRRFQKLFQQTQEASDGKGESARSQTIEFDSSVQLQREYVYRERNALINGESGHFSPRQIIDTVISSFIAYLDGEVEKEELIFEVNRFIFDNMSYNLQGISKEMSLEEIKNYLFKIADEILREKHNLLGDSFGDFERTAALKAIDEAWIEEVDYLQQLRTVATARQTAQRNPVFEYHKEAYKSYNIMKKEIREQTFRNLLLSEVSFNENGDLQIYFI.

ATP contacts are provided by residues Gln84, 102-106 (GEGKT), and Asp496.

It belongs to the SecA family. In terms of assembly, monomer and homodimer. Part of the essential Sec protein translocation apparatus which comprises SecA, SecYEG and auxiliary proteins SecDF. Other proteins may also be involved.

The protein resides in the cell membrane. The protein localises to the cytoplasm. The enzyme catalyses ATP + H2O + cellular proteinSide 1 = ADP + phosphate + cellular proteinSide 2.. Functionally, part of the Sec protein translocase complex. Interacts with the SecYEG preprotein conducting channel. Has a central role in coupling the hydrolysis of ATP to the transfer of proteins into and across the cell membrane, serving as an ATP-driven molecular motor driving the stepwise translocation of polypeptide chains across the membrane. This is Protein translocase subunit SecA 2 from Streptococcus agalactiae serotype V (strain ATCC BAA-611 / 2603 V/R).